The sequence spans 594 residues: Glutamate decarboxylase 1 (594 aa).

The segment covering methionine 1–serine 13 has biased composition (low complexity). Positions methionine 1–asparagine 23 are disordered. The residue at position 78 (serine 78) is a Phosphoserine. Residue glutamine 190–serine 192 participates in 4-aminobutanoate binding. Lysine 405 bears the N6-(pyridoxal phosphate)lysine mark. Arginine 567 contributes to the 4-aminobutanoate binding site.

The protein belongs to the group II decarboxylase family. Homodimer. Pyridoxal 5'-phosphate serves as cofactor.

The catalysed reaction is L-glutamate + H(+) = 4-aminobutanoate + CO2. Functionally, catalyzes the synthesis of the inhibitory neurotransmitter gamma-aminobutyric acid (GABA) with pyridoxal 5'-phosphate as cofactor. This chain is Glutamate decarboxylase 1 (GAD1), found in Pongo abelii (Sumatran orangutan).